A 358-amino-acid polypeptide reads, in one-letter code: 3-isopropylmalate dehydrogenase (358 aa).

77–90 (GEKWDSLPRELRPE) lines the NAD(+) pocket. Substrate is bound by residues Arg97, Arg107, Arg135, and Asp220. Residues Asp220, Asp244, and Asp248 each coordinate Mg(2+). 277–289 (GSAPDIAGQGIAN) serves as a coordination point for NAD(+).

Belongs to the isocitrate and isopropylmalate dehydrogenases family. LeuB type 1 subfamily. Homodimer. Mg(2+) serves as cofactor. Requires Mn(2+) as cofactor.

Its subcellular location is the cytoplasm. It carries out the reaction (2R,3S)-3-isopropylmalate + NAD(+) = 4-methyl-2-oxopentanoate + CO2 + NADH. The protein operates within amino-acid biosynthesis; L-leucine biosynthesis; L-leucine from 3-methyl-2-oxobutanoate: step 3/4. Catalyzes the oxidation of 3-carboxy-2-hydroxy-4-methylpentanoate (3-isopropylmalate) to 3-carboxy-4-methyl-2-oxopentanoate. The product decarboxylates to 4-methyl-2 oxopentanoate. This Wolinella succinogenes (strain ATCC 29543 / DSM 1740 / CCUG 13145 / JCM 31913 / LMG 7466 / NCTC 11488 / FDC 602W) (Vibrio succinogenes) protein is 3-isopropylmalate dehydrogenase.